The chain runs to 218 residues: Ribosomal RNA small subunit methyltransferase G (218 aa).

S-adenosyl-L-methionine is bound by residues Gly-82, Leu-87, 137–138 (VE), and Arg-152.

It belongs to the methyltransferase superfamily. RNA methyltransferase RsmG family.

It is found in the cytoplasm. It catalyses the reaction guanosine(527) in 16S rRNA + S-adenosyl-L-methionine = N(7)-methylguanosine(527) in 16S rRNA + S-adenosyl-L-homocysteine. Functionally, specifically methylates the N7 position of guanine in position 527 of 16S rRNA. In Herminiimonas arsenicoxydans, this protein is Ribosomal RNA small subunit methyltransferase G.